The sequence spans 258 residues: Trypsin eta (258 aa).

Positions 1 to 22 are cleaved as a signal peptide; the sequence is MNKVILRILALLFLLGIGAVSA. The propeptide at 23–27 is activation peptide; it reads QPDGR. The Peptidase S1 domain maps to 28–258; that stretch reads IVGGADTTNY…YFKDWIASRV (231 aa). C59 and C75 are disulfide-bonded. Catalysis depends on charge relay system residues H74 and D120. Cystine bridges form between C185–C200 and C211–C235. S215 serves as the catalytic Charge relay system.

Belongs to the peptidase S1 family.

The protein resides in the secreted. It localises to the extracellular space. The catalysed reaction is Preferential cleavage: Arg-|-Xaa, Lys-|-Xaa.. The sequence is that of Trypsin eta (etaTry) from Drosophila erecta (Fruit fly).